The sequence spans 561 residues: Melanopsin-A (561 aa).

The Extracellular segment spans residues 1–34 (MRPSTDTMEADTAATHRNFITKVDVPDHAHYTVA). The helical transmembrane segment at 35–55 (FFVSVIGTLGVTGNALVQFAF) threads the bilayer. Topologically, residues 56 to 68 (YSNKKLRNLPNYF) are cytoplasmic. A helical transmembrane segment spans residues 69-89 (IMNQAASDFLMAFTQSPFFFI). Topologically, residues 90–104 (NCLNREWIFGELGCK) are extracellular. Residues Cys103 and Cys181 are joined by a disulfide bond. A helical transmembrane segment spans residues 105 to 125 (LYAFLGALFGITSMINLLAIS). Residues 126 to 148 (LDRYMVITRPLEAMKWNSKRRTT) lie on the Cytoplasmic side of the membrane. The chain crosses the membrane as a helical span at residues 149 to 169 (IAILLVWLYSLAWSLAPLVGW). Residues 170–201 (SSYIPEGLRTSCTWDYVTYTASNRSYTMMLCC) lie on the Extracellular side of the membrane. A glycan (N-linked (GlcNAc...) asparagine) is linked at Asn192. The helical transmembrane segment at 202 to 222 (FVFFIPLAIISYCYLFMFLAI) threads the bilayer. Topologically, residues 223–255 (RKTSRDVERLGIQVRKSTIIRQKSIRTEWKLAK) are cytoplasmic. A helical transmembrane segment spans residues 256–276 (IAFVVIVVYVLSWSPYACVTM). Residues 277–291 (ISWSGHANILSPYSK) are Extracellular-facing. Residues 292-312 (TVPAVIAKASTIYNPFIYAII) form a helical membrane-spanning segment. Position 299 is an N6-(retinylidene)lysine (Lys299). At 313–561 (HQKYRKTLAD…EDSLEDNDVV (249 aa)) the chain is on the cytoplasmic side. Disordered stretches follow at residues 359–385 (AIRR…SYSS), 404–448 (ASFR…SATH), 479–503 (NGLS…SKSA), and 539–561 (SFTD…NDVV). Positions 371-385 (ASASKTAAGASSYSS) are enriched in low complexity. Positions 550–561 (VDEDSLEDNDVV) are enriched in acidic residues.

It belongs to the G-protein coupled receptor 1 family. Opsin subfamily. In terms of tissue distribution, expressed in retina and brain. Expressed in a subset of retinal horizontal cells as well as a small number of amacrine and retinal ganglion cells. Also expressed in a small population of neurons in the suprachiasmatic nucleus (SNC).

The protein resides in the cell membrane. Its function is as follows. Photoreceptor implicated in non-image-forming responses to light. This chain is Melanopsin-A (opn4a), found in Gadus morhua (Atlantic cod).